The sequence spans 149 residues: Angiogenin (149 aa).

Residues 1–24 (MVMGLGPLVLIFVLGLGVTPPTLA) form the signal peptide. Q25 carries the pyrrolidone carboxylic acid modification. H37 functions as the Proton acceptor in the catalytic mechanism. R45 is a binding site for tRNA. 3 disulfides stabilise this stretch: C50–C105, C63–C116, and C81–C131. The Nucleolar localization signal motif lies at 55 to 59 (KRRDL). TRNA is bound by residues C105 and I127. Residue H138 is the Proton donor of the active site.

The protein belongs to the pancreatic ribonuclease family. Homodimer. Interacts with RNH1; inhibiting ANG ribonuclease activity. Interacts with PCNA.

Its subcellular location is the secreted. The protein resides in the nucleus. The protein localises to the nucleolus. It is found in the cytoplasm. It localises to the stress granule. Its activity is regulated as follows. Has weak tRNA ribonuclease activity by itself due to partial autoinhibition by its C-terminus, which folds into a short alpha-helix that partially occludes the substrate-binding site. In absence of stress, the ribonuclease activity is inhibited by RNH1 in the cytoplasm. In response to stress, dissociates from RNH1 in the cytoplasm and associates with cytoplasmic ribosomes with vacant A-sites: ribosomes directly activate the tRNA ribonuclease activity of ANG by refolding the C-terminal alpha-helix. In response to stress, the angiogenic activity of ANG is inhibited by RNH1 in the nucleus. Secreted ribonuclease that can either promote or restrict cell proliferation of target cells, depending on the context. Endocytosed in target cells via its receptor PLXNB2 and translocates to the cytoplasm or nucleus. Under stress conditions, localizes to the cytoplasm and promotes the assembly of stress granules (SGs): specifically cleaves a subset of tRNAs within anticodon loops to produce tRNA-derived stress-induced fragments (tiRNAs), resulting in translation repression and inhibition of cell proliferation. tiRNas also prevent formation of apoptosome, thereby promoting cell survival. Preferentially cleaves RNAs between a pyrimidine and an adenosine residue, suggesting that it cleaves the anticodon loop of tRNA(Ala) (32-UUAGCAU-38) after positions 33 and 36. Cleaves a subset of tRNAs, including tRNA(Ala), tRNA(Glu), tRNA(Gly), tRNA(Lys), tRNA(Val), tRNA(His), tRNA(Asp) and tRNA(Sec). Under growth conditions and in differentiated cells, translocates to the nucleus and stimulates ribosomal RNA (rRNA) transcription, including that containing the initiation site sequences of 45S rRNA, thereby promoting cell growth and proliferation. Angiogenin induces vascularization of normal and malignant tissues via its ability to promote rRNA transcription. Involved in hematopoietic stem and progenitor cell (HSPC) growth and survival by promoting rRNA transcription in growth conditions and inhibiting translation in response to stress, respectively. Mediates the crosstalk between myeloid and intestinal epithelial cells to protect the intestinal epithelial barrier integrity: secreted by myeloid cells and promotes intestinal epithelial cells proliferation and survival. Also mediates osteoclast-endothelial cell crosstalk in growing bone: produced by osteoclasts and protects the neighboring vascular cells against senescence by promoting rRNA transcription. The polypeptide is Angiogenin (ANG) (Oryctolagus cuniculus (Rabbit)).